The sequence spans 65 residues: Conotoxin Cal1.3 (65 aa).

Residues 1–18 (MRCLPVFIILLLLASTAA) form the signal peptide. Positions 19–49 (VDVAGSKLKRRLERKPYQGSQAYVKKTAFGL) are excised as a propeptide. Disulfide bonds link C52–C62 and C53–C59. 4-hydroxyproline is present on P61. C62 carries the post-translational modification Cysteine amide.

The protein belongs to the conotoxin T superfamily. Expressed by the venom duct.

It is found in the secreted. Functionally, probable neurotoxin with unknown target. Possibly targets ion channels. This Californiconus californicus (California cone) protein is Conotoxin Cal1.3.